The primary structure comprises 481 residues: 3-ketoacyl-CoA synthase 8 (481 aa).

The next 2 helical transmembrane spans lie at 4 to 24 (LKMVFFKILFISLMAGLAMKG) and 44 to 64 (LQTISLLLFLVVFVWILYMLT). The region spanning 61–358 (YMLTRPKPVY…FFITFVKKKY (298 aa)) is the FAE domain. Active-site residues include Cys-213, His-292, His-376, His-380, His-409, and Asn-413.

This sequence belongs to the thiolase-like superfamily. Chalcone/stilbene synthases family. In terms of tissue distribution, expressed in leaves and seedlings.

Its subcellular location is the endoplasmic reticulum membrane. The catalysed reaction is a very-long-chain acyl-CoA + malonyl-CoA + H(+) = a very-long-chain 3-oxoacyl-CoA + CO2 + CoA. The protein operates within lipid metabolism; fatty acid biosynthesis. In Arabidopsis thaliana (Mouse-ear cress), this protein is 3-ketoacyl-CoA synthase 8.